A 536-amino-acid polypeptide reads, in one-letter code: 2-isopropylmalate synthase (536 aa).

The Pyruvate carboxyltransferase domain occupies 8-273 (VLIFDTTLRD…FFGKDSESPT (266 aa)). Asp17, His208, His210, and Asn244 together coordinate Mn(2+). The regulatory domain stretch occupies residues 408–536 (KLHLVQVSCG…PQHDVVKANL (129 aa)).

This sequence belongs to the alpha-IPM synthase/homocitrate synthase family. LeuA type 1 subfamily. In terms of assembly, homodimer. The cofactor is Mn(2+).

Its subcellular location is the cytoplasm. The enzyme catalyses 3-methyl-2-oxobutanoate + acetyl-CoA + H2O = (2S)-2-isopropylmalate + CoA + H(+). It functions in the pathway amino-acid biosynthesis; L-leucine biosynthesis; L-leucine from 3-methyl-2-oxobutanoate: step 1/4. Its function is as follows. Catalyzes the condensation of the acetyl group of acetyl-CoA with 3-methyl-2-oxobutanoate (2-ketoisovalerate) to form 3-carboxy-3-hydroxy-4-methylpentanoate (2-isopropylmalate). The chain is 2-isopropylmalate synthase from Prochlorococcus marinus (strain SARG / CCMP1375 / SS120).